Consider the following 160-residue polypeptide: Major strawberry allergen Fra a 1-D (160 aa).

It belongs to the BetVI family. Monomer.

The sequence is that of Major strawberry allergen Fra a 1-D from Fragaria ananassa (Strawberry).